We begin with the raw amino-acid sequence, 105 residues long: UPF0145 protein Mevan_1624 (105 aa).

This sequence belongs to the UPF0145 family.

This is UPF0145 protein Mevan_1624 from Methanococcus vannielii (strain ATCC 35089 / DSM 1224 / JCM 13029 / OCM 148 / SB).